The primary structure comprises 167 residues: Ubiquitin-fold modifier-conjugating enzyme 1 (167 aa).

The active-site Glycyl thioester intermediate is Cys-116.

This sequence belongs to the ubiquitin-conjugating enzyme family. UFC1 subfamily. Interacts with UBA5 (via C-terminus). Interacts with UFL1. Interacts with UFM1.

Its function is as follows. E2-like enzyme which specifically catalyzes the second step in ufmylation. Accepts the ubiquitin-like modifier UFM1 from the E1 enzyme UBA5 and forms an intermediate with UFM1 via a thioester linkage. Ufmylation is involved in various processes, such as ribosome recycling, response to DNA damage, interferon response or reticulophagy (also called ER-phagy). The chain is Ubiquitin-fold modifier-conjugating enzyme 1 from Salmo salar (Atlantic salmon).